The following is a 315-amino-acid chain: Putative quercetin 2,3-dioxygenase PA1205 (315 aa).

4 residues coordinate a divalent metal cation: His77, His79, His121, and Glu123.

Belongs to the pirin family. It depends on a divalent metal cation as a cofactor.

It carries out the reaction quercetin + O2 = 2-(3,4-dihydroxybenzoyloxy)-4,6-dihydroxybenzoate + CO. Its pathway is flavonoid metabolism; quercetin degradation. In terms of biological role, putative quercetin 2,3-dioxygenase. This chain is Putative quercetin 2,3-dioxygenase PA1205, found in Pseudomonas aeruginosa (strain ATCC 15692 / DSM 22644 / CIP 104116 / JCM 14847 / LMG 12228 / 1C / PRS 101 / PAO1).